Reading from the N-terminus, the 115-residue chain is Meiotically up-regulated gene 168 protein (115 aa).

The interval 82–115 (SVSPVHTKAEEPGLGLTPMNSADFSNKIASRYRS) is disordered. Residues 99 to 109 (PMNSADFSNKI) are compositionally biased toward polar residues.

It localises to the nucleus. In terms of biological role, has a role in meiosis. The protein is Meiotically up-regulated gene 168 protein (mug168) of Schizosaccharomyces pombe (strain 972 / ATCC 24843) (Fission yeast).